The chain runs to 600 residues: Malto-oligosyltrehalose trehalohydrolase (600 aa).

The interval 1-34 (MTQTQPVTPTPPASFQTQHDPRTRLGATPLPGGA) is disordered. 273–278 (RLDATP) lines the substrate pocket. Asp-275 functions as the Nucleophile in the catalytic mechanism. Catalysis depends on Glu-308, which acts as the Proton donor. Residues 328 to 332 (DDFHH), Glu-376, and 399 to 404 (HDQIGN) each bind substrate.

Belongs to the glycosyl hydrolase 13 family. Monomer.

It is found in the cytoplasm. It catalyses the reaction hydrolysis of (1-&gt;4)-alpha-D-glucosidic linkage in 4-alpha-D-[(1-&gt;4)-alpha-D-glucanosyl]n trehalose to yield trehalose and (1-&gt;4)-alpha-D-glucan.. It functions in the pathway glycan biosynthesis; trehalose biosynthesis. The sequence is that of Malto-oligosyltrehalose trehalohydrolase (treZ) from Deinococcus radiodurans (strain ATCC 13939 / DSM 20539 / JCM 16871 / CCUG 27074 / LMG 4051 / NBRC 15346 / NCIMB 9279 / VKM B-1422 / R1).